The following is a 302-amino-acid chain: Succinate--CoA ligase [ADP-forming] subunit alpha (302 aa).

CoA is bound by residues 17–20 (TGST), Lys-43, and 96–98 (ITE). Tyr-159 contacts substrate. The active-site Tele-phosphohistidine intermediate is His-247.

This sequence belongs to the succinate/malate CoA ligase alpha subunit family. Heterotetramer of two alpha and two beta subunits.

It carries out the reaction succinate + ATP + CoA = succinyl-CoA + ADP + phosphate. The enzyme catalyses GTP + succinate + CoA = succinyl-CoA + GDP + phosphate. Its pathway is carbohydrate metabolism; tricarboxylic acid cycle; succinate from succinyl-CoA (ligase route): step 1/1. Succinyl-CoA synthetase functions in the citric acid cycle (TCA), coupling the hydrolysis of succinyl-CoA to the synthesis of either ATP or GTP and thus represents the only step of substrate-level phosphorylation in the TCA. The alpha subunit of the enzyme binds the substrates coenzyme A and phosphate, while succinate binding and nucleotide specificity is provided by the beta subunit. The sequence is that of Succinate--CoA ligase [ADP-forming] subunit alpha from Staphylococcus aureus (strain MSSA476).